A 428-amino-acid polypeptide reads, in one-letter code: Enolase (428 aa).

(2R)-2-phosphoglycerate is bound at residue glutamine 163. Glutamate 205 serves as the catalytic Proton donor. 3 residues coordinate Mg(2+): aspartate 242, glutamate 285, and aspartate 311. (2R)-2-phosphoglycerate contacts are provided by lysine 336, arginine 365, serine 366, and lysine 387. Catalysis depends on lysine 336, which acts as the Proton acceptor.

This sequence belongs to the enolase family. Requires Mg(2+) as cofactor.

The protein resides in the cytoplasm. It localises to the secreted. Its subcellular location is the cell surface. The catalysed reaction is (2R)-2-phosphoglycerate = phosphoenolpyruvate + H2O. It participates in carbohydrate degradation; glycolysis; pyruvate from D-glyceraldehyde 3-phosphate: step 4/5. Its function is as follows. Catalyzes the reversible conversion of 2-phosphoglycerate (2-PG) into phosphoenolpyruvate (PEP). It is essential for the degradation of carbohydrates via glycolysis. The sequence is that of Enolase from Desulfatibacillum aliphaticivorans.